An 898-amino-acid polypeptide reads, in one-letter code: Methionine--tRNA ligase, cytoplasmic (898 aa).

The region spanning 74 to 198 (GWEQDDLTNQ…VLKQQGVLAL (125 aa)) is the GST C-terminal domain. The short motif at 273-283 (PYVNNVPHLGN) is the 'HIGH' region element. The 'KMSKS' region signature appears at 593-597 (KFSKS). Lys596 contributes to the ATP binding site. Ser825 carries the post-translational modification Phosphoserine. A Phosphothreonine modification is found at Thr833. The WHEP-TRS domain maps to 839–895 (QIQALTEEVTKQGNIVRELKAQKADKNQIAAEVAKLLDLKKQLALAEGKPLETSKGK).

This sequence belongs to the class-I aminoacyl-tRNA synthetase family. As to quaternary structure, monomer. Part of a multisubunit complex that groups tRNA ligases for Arg (RARS1), Asp (DARS1), Gln (QARS1), Ile (IARS1), Leu (LARS1), Lys (KARS1), Met (MARS1) the bifunctional ligase for Glu and Pro (EPRS1) and the auxiliary subunits AIMP1/p43, AIMP2/p38 and EEF1E1/p18. Forms a linear complex that contains MARS1, EEF1E1, EPRS1 and AIMP2 that is at the core of the multisubunit complex.

Its subcellular location is the cytoplasm. The protein localises to the cytosol. The protein resides in the nucleus. It localises to the nucleolus. It carries out the reaction tRNA(Met) + L-methionine + ATP = L-methionyl-tRNA(Met) + AMP + diphosphate. Catalyzes the specific attachment of an amino acid to its cognate tRNA in a 2 step reaction: the amino acid (AA) is first activated by ATP to form AA-AMP and then transferred to the acceptor end of the tRNA. Plays a role in the synthesis of ribosomal RNA in the nucleolus. This Bos taurus (Bovine) protein is Methionine--tRNA ligase, cytoplasmic (MARS1).